A 170-amino-acid chain; its full sequence is RNA pyrophosphohydrolase (170 aa).

One can recognise a Nudix hydrolase domain in the interval 8–158 (PYRTCVGMML…KRPVYERVVK (151 aa)). Positions 46 to 67 (GGVDPGEDTWLAAKRELYEETS) match the Nudix box motif.

Belongs to the Nudix hydrolase family. RppH subfamily. Requires a divalent metal cation as cofactor.

Accelerates the degradation of transcripts by removing pyrophosphate from the 5'-end of triphosphorylated RNA, leading to a more labile monophosphorylated state that can stimulate subsequent ribonuclease cleavage. The polypeptide is RNA pyrophosphohydrolase (Nitrobacter winogradskyi (strain ATCC 25391 / DSM 10237 / CIP 104748 / NCIMB 11846 / Nb-255)).